The following is a 515-amino-acid chain: ATP synthase subunit alpha (515 aa).

171 to 178 provides a ligand contact to ATP; the sequence is GDRQTGKT.

It belongs to the ATPase alpha/beta chains family. F-type ATPases have 2 components, CF(1) - the catalytic core - and CF(0) - the membrane proton channel. CF(1) has five subunits: alpha(3), beta(3), gamma(1), delta(1), epsilon(1). CF(0) has three main subunits: a(1), b(2) and c(9-12). The alpha and beta chains form an alternating ring which encloses part of the gamma chain. CF(1) is attached to CF(0) by a central stalk formed by the gamma and epsilon chains, while a peripheral stalk is formed by the delta and b chains.

The protein resides in the cell membrane. The enzyme catalyses ATP + H2O + 4 H(+)(in) = ADP + phosphate + 5 H(+)(out). In terms of biological role, produces ATP from ADP in the presence of a proton gradient across the membrane. The alpha chain is a regulatory subunit. This Stenotrophomonas maltophilia (strain K279a) protein is ATP synthase subunit alpha.